Here is a 162-residue protein sequence, read N- to C-terminus: Nitric oxide synthase, inducible (162 aa).

Over residues 24-37 the composition is skewed to polar residues; it reads LQYHSLSKQQNESP. The disordered stretch occupies residues 24–65; the sequence is LQYHSLSKQQNESPQPLVGTGKKSPESLVKPDATPLSSPRHV. Cysteine 90 and cysteine 95 together coordinate Zn(2+). Serine 98 is a binding site for (6R)-L-erythro-5,6,7,8-tetrahydrobiopterin. Glutamate 132 is a binding site for L-arginine. Histidine 160 contacts FAD.

The protein belongs to the NOS family. As to quaternary structure, homodimer. Interacts with NHERF1. Interacts with GAPDH; induced by oxidatively-modified low-densitity lipoprotein (LDL(ox)). Interacts with S100A8 and S100A9 to form the iNOS-S100A8/9 transnitrosylase complex. Interacts with SPSB1, SPSB2 and SPSB4. Interacts with ELOC and CUL5 in the presence of SPSB1 or SPSB2 or SPSB4. Forms a complex with ASL, ASS1 and HSP90AA1; the complex regulates cell-autonomous L-arginine synthesis and citrulline recycling while channeling extracellular L-arginine to nitric oxide synthesis pathway. The cofactor is heme b. FAD serves as cofactor. FMN is required as a cofactor. Requires (6R)-L-erythro-5,6,7,8-tetrahydrobiopterin as cofactor. In terms of processing, polyubiquitinated; mediated by SPSB1, SPSB2 and SPSB4, leading to proteasomal degradation.

The protein resides in the cytoplasm. The protein localises to the cytosol. It catalyses the reaction 2 L-arginine + 3 NADPH + 4 O2 + H(+) = 2 L-citrulline + 2 nitric oxide + 3 NADP(+) + 4 H2O. Its activity is regulated as follows. Regulated by calcium/calmodulin. Functionally, produces nitric oxide (NO) which is a messenger molecule with diverse functions throughout the body. In macrophages, NO mediates tumoricidal and bactericidal actions. Also has nitrosylase activity and mediates cysteine S-nitrosylation of cytoplasmic target proteins such PTGS2/COX2. As component of the iNOS-S100A8/9 transnitrosylase complex involved in the selective inflammatory stimulus-dependent S-nitrosylation of GAPDH implicated in regulation of the GAIT complex activity and probably multiple targets including ANXA5, EZR, MSN and VIM. Involved in inflammation, enhances the synthesis of pro-inflammatory mediators such as IL6 and IL8. This Macaca mulatta (Rhesus macaque) protein is Nitric oxide synthase, inducible (NOS2).